A 377-amino-acid polypeptide reads, in one-letter code: TelA-like protein SSP1345 (377 aa).

Over residues 1–18 the composition is skewed to basic and acidic residues; that stretch reads MAREQDSINSHPLDKYID. The disordered stretch occupies residues 1 to 39; that stretch reads MAREQDSINSHPLDKYIDENSANESEIIKSSSQFSHEDQ. Positions 20-34 are enriched in polar residues; sequence NSANESEIIKSSSQF.

This sequence belongs to the TelA family.

The polypeptide is TelA-like protein SSP1345 (Staphylococcus saprophyticus subsp. saprophyticus (strain ATCC 15305 / DSM 20229 / NCIMB 8711 / NCTC 7292 / S-41)).